We begin with the raw amino-acid sequence, 165 residues long: Type IV major pilin protein PilE1 (165 aa).

The propeptide at 1-7 (MNTLQKG) is leader sequence. N-methylphenylalanine is present on phenylalanine 8. Residues 8–28 (FTLIELMIVIAIVGILAAVAL) traverse the membrane as a helical segment. Serine 70 carries an O-linked (DADDGlc) serine glycan. O-(2-aminoethylphosphoryl)serine; alternate is present on serine 75. O-(2-cholinephosphoryl)serine; alternate is present on serine 75. Serine 75 is subject to Phosphoserine; alternate. Position 101 is an O-(sn-1-glycerophosphoryl)serine; partial (serine 101). A disulfide bond links cysteine 128 and cysteine 158. The segment covering 137–153 (DDTVADAKDGKEIDTKH) has biased composition (basic and acidic residues). The segment at 137–165 (DDTVADAKDGKEIDTKHLPSTCRDNFDAK) is disordered.

Belongs to the N-Me-Phe pilin family. As to quaternary structure, the pili are polar flexible filaments of about 5.4 nanometers diameter and 2.5 micrometers average length; they consist of only a single polypeptide chain arranged in a helical configuration of five subunits per turn in the assembled pilus. Post-translationally, the O-linked glycan identified as Gal-GlcNAc disaccharide in PubMed:7477282 and PubMed:10048019 is now identified as either a hexosyl-diacetamidotrideoxyhexoside (DATDHex) by mass spectrometry in PubMed:15249686, or alpha-D-galactopyranosyl-(1-&gt;3)-2,4-diacetamido-2,4-dideoxy-beta-D-glucopyranoside (DADDGlc) by X-ray diffraction in PubMed:16949362. It is not clear whether there is a chemical difference in the glycosylation of the two derivatives of strain MS11 used in these experiments, or not. In terms of processing, in some MS11 derivative strains, Ser-75 is modified to O-(2-aminoethylphosphoryl)serine, and in some other derivatives that can be secondarily modified to O-(2-cholinephosphoryl)serine by N-methylation.

It is found in the fimbrium. The protein localises to the membrane. Major component of the type IV pilus (T4P) that plays a role in cellular adherence, microcolony formation, resistance to neutrophil mediated killing, twitching motility as well as transformation. Mediates the attachment and the formation of bacterial microcolonies on host epithelial cells. Mechanistically, pili retractation induces host NF-kappa-B activation in infected cells, which is temporally associated with the formation of gonococcal microcolonies. This is Type IV major pilin protein PilE1 (pilE1) from Neisseria gonorrhoeae.